The primary structure comprises 613 residues: Dihydroxy-acid dehydratase (613 aa).

Asp81 contributes to the Mg(2+) binding site. Position 122 (Cys122) interacts with [2Fe-2S] cluster. Mg(2+)-binding residues include Asp123 and Lys124. An N6-carboxylysine modification is found at Lys124. Cys193 contacts [2Fe-2S] cluster. Glu489 serves as a coordination point for Mg(2+). The active-site Proton acceptor is the Ser515.

It belongs to the IlvD/Edd family. In terms of assembly, homodimer. [2Fe-2S] cluster serves as cofactor. It depends on Mg(2+) as a cofactor.

It catalyses the reaction (2R)-2,3-dihydroxy-3-methylbutanoate = 3-methyl-2-oxobutanoate + H2O. The catalysed reaction is (2R,3R)-2,3-dihydroxy-3-methylpentanoate = (S)-3-methyl-2-oxopentanoate + H2O. Its pathway is amino-acid biosynthesis; L-isoleucine biosynthesis; L-isoleucine from 2-oxobutanoate: step 3/4. It functions in the pathway amino-acid biosynthesis; L-valine biosynthesis; L-valine from pyruvate: step 3/4. Functionally, functions in the biosynthesis of branched-chain amino acids. Catalyzes the dehydration of (2R,3R)-2,3-dihydroxy-3-methylpentanoate (2,3-dihydroxy-3-methylvalerate) into 2-oxo-3-methylpentanoate (2-oxo-3-methylvalerate) and of (2R)-2,3-dihydroxy-3-methylbutanoate (2,3-dihydroxyisovalerate) into 2-oxo-3-methylbutanoate (2-oxoisovalerate), the penultimate precursor to L-isoleucine and L-valine, respectively. The polypeptide is Dihydroxy-acid dehydratase (Pseudomonas fluorescens (strain SBW25)).